The chain runs to 121 residues: Large ribosomal subunit protein eL8 (121 aa).

Belongs to the eukaryotic ribosomal protein eL8 family. As to quaternary structure, part of the 50S ribosomal subunit. Probably part of the RNase P complex.

It is found in the cytoplasm. Multifunctional RNA-binding protein that recognizes the K-turn motif in ribosomal RNA, the RNA component of RNase P, box H/ACA, box C/D and box C'/D' sRNAs. This is Large ribosomal subunit protein eL8 from Thermoplasma acidophilum (strain ATCC 25905 / DSM 1728 / JCM 9062 / NBRC 15155 / AMRC-C165).